The primary structure comprises 202 residues: uncharacterized protein (202 aa).

Belongs to the NAD(P)H dehydrogenase (quinone) family.

This is an uncharacterized protein from Haemophilus influenzae (strain ATCC 51907 / DSM 11121 / KW20 / Rd).